A 76-amino-acid polypeptide reads, in one-letter code: MFVLLIILSIILAQVTDAHSELHVRRVCGTAIIKNIMRLCPGVPACENGEVPSPTEYCSMGYSDSQVKYLCCPTSQ.

An N-terminal signal peptide occupies residues 1 to 18 (MFVLLIILSIILAQVTDA). 3 disulfide bridges follow: C28–C58, C40–C71, and C46–C72.

This sequence belongs to the insulin family.

The protein localises to the secreted. This chain is Probable insulin-like peptide alpha-type 3 (ins-23), found in Caenorhabditis elegans.